Here is a 521-residue protein sequence, read N- to C-terminus: MSLFKIRMPETVAEGTRLALRAFSLVVAVDEHGGIGDGRSIPWNVPEDMKFFRDLTTKLRGKNVKPSPAKRNAVVMGRKTWDSIPPKFRPLPGRLNVVLSSTLTTQHLLDGLPDEEKRNLHADSIVAVNGGLEQALRLLASPNYTPSIETVYCIGGGSVYAEALRPPCVHLLQAIYRTTIRASESSCSVFFRVPESGTEAAAGIEWQRETISEELTSANGNETKYYFEKLIPRNREEEQYLSLVDRIIREGNVKHDRTGVGTLSIFGAQMRFSLRNNRLPLLTTKRVFWRGVCEELLWFLRGETYAKKLSDKGVHIWDDNGSRAFLDSRGLTEYEEMDLGPVYGFQWRHFGAAYTHHDANYDGQGVDQIKAIVETLKTNPDDRRMLFTAWNPSALPRMALPPCHLLAQFYVSNGELSCMLYQRSCDMGLGVPFNIASYALLTILIAKATGLRPGELVHTLGDAHVYSNHVEPCNEQLKRVPRAFPYLVFRREREFLEDYEEGDMEVIDYAPYPPISMKMAV.

The region spanning 22 to 232 is the DHFR domain; that stretch reads AFSLVVAVDE…TKYYFEKLIP (211 aa). A substrate-binding site is contributed by valine 26. NADP(+)-binding positions include alanine 28 and 34-40; that span reads GIGDGRS. Aspartate 48 contacts substrate. Residues 78–80 and 99–102 each bind NADP(+); these read RKT and LSST. Residues isoleucine 154, tyrosine 160, and threonine 178 each coordinate substrate. Residue 155–162 coordinates NADP(+); the sequence is GGGSVYAE. Positions 237-521 are thymidylate synthase; the sequence is EEQYLSLVDR…YPPISMKMAV (285 aa). Position 257 (arginine 257) interacts with dUMP. Residue cysteine 403 is part of the active site. DUMP is bound by residues histidine 404, 422–426, asparagine 434, and 464–466; these read QRSCD and HVY.

This sequence in the N-terminal section; belongs to the dihydrofolate reductase family. It in the C-terminal section; belongs to the thymidylate synthase family. Homodimer.

The catalysed reaction is (6S)-5,6,7,8-tetrahydrofolate + NADP(+) = 7,8-dihydrofolate + NADPH + H(+). It carries out the reaction dUMP + (6R)-5,10-methylene-5,6,7,8-tetrahydrofolate = 7,8-dihydrofolate + dTMP. It functions in the pathway cofactor biosynthesis; tetrahydrofolate biosynthesis; 5,6,7,8-tetrahydrofolate from 7,8-dihydrofolate: step 1/1. Bifunctional enzyme. Involved in de novo dTMP biosynthesis. Key enzyme in folate metabolism. Catalyzes an essential reaction for de novo glycine and purine synthesis, DNA precursor synthesis, and for the conversion of dUMP to dTMP. This is Bifunctional dihydrofolate reductase-thymidylate synthase from Trypanosoma cruzi.